Here is a 144-residue protein sequence, read N- to C-terminus: NADH dehydrogenase [ubiquinone] 1 alpha subcomplex subunit 13 (144 aa).

Ala-2 is modified (N-acetylalanine). The helical transmembrane segment at 30-51 (LSGYSMFAVGIGALLFGYWSMM) threads the bilayer.

Complex I is composed of 45 different subunits. Interacts with CARD15, but not with CARD4. Interacts with STAT3, but not with STAT1, STAT2 and STAT5A. Interacts with OLFM4.

It is found in the mitochondrion inner membrane. It localises to the nucleus. Accessory subunit of the mitochondrial membrane respiratory chain NADH dehydrogenase (Complex I), that is believed not to be involved in catalysis. Complex I functions in the transfer of electrons from NADH to the respiratory chain. The immediate electron acceptor for the enzyme is believed to be ubiquinone. Involved in the interferon/all-trans-retinoic acid (IFN/RA) induced cell death. This apoptotic activity is inhibited by interaction with viral IRF1. Prevents the transactivation of STAT3 target genes. May play a role in CARD15-mediated innate mucosal responses and serve to regulate intestinal epithelial cell responses to microbes. The sequence is that of NADH dehydrogenase [ubiquinone] 1 alpha subcomplex subunit 13 (NDUFA13) from Bos taurus (Bovine).